The following is a 663-amino-acid chain: MNKLNLGILAHVDAGKTSLTERLLHRTGVIDEVGSVDAGTTTTDSMELERQRGITIRSAVATFVLDDLKVNLIDTPGHSDFISEVERALGVLDGAVLVVSAVEGVQPQTRILMRTLRRLGIPTLVFVNKIDRGGARPDGVLREIRDRLTPAAVALSAVADAGTPRARAIALGPDTDPDFAVRVGELLADHDDAFLTAYLDEEHVLTEKEYAEELAAQTARGLVHPVYFGSALTGEGLDHLVHGIRELLPSVHASQDAPLRATVFKVDRGARGEAVAYLRLVSGTLGTRDSVTLHRVDHTGRVTEHAGRITALRVFEHGSATSETRATAGDIAQAWGLKDVRVGDRAGHLDGPPPRNFFAPPSLETVIRPERPEEAGRLHAALRMLDEQDPSIDLRQDEENAAGAVVRLYGEVQKEILGSTLAESFGVRVRFDPTRTVCIEKPVGTGEALIELDTRTHNYFWGAPWVCASDRPSPARAITFRLAVELGSLPLAFHKAIEETVHTTLRHGLYGWQVTDCAVTLTRTGVRSPVSAADDFRKANARLVLMDALGRAGTEVHEPVSSFELEVPAARLSPVLAKLAELGATPGVPTAEGDVFRLEGTMPTSLVHDFNQRVPGLTQGEGVFLAEHRGYRPAVGQPPVRPRPEGPNPLNRDEYILHVLKRV.

In terms of domain architecture, tr-type G spans 1-252; sequence MNKLNLGILA…GIRELLPSVH (252 aa). GTP contacts are provided by residues 10-17, 74-78, and 128-131; these read AHVDAGKT, DTPGH, and NKID.

The protein belongs to the TRAFAC class translation factor GTPase superfamily. Classic translation factor GTPase family. TetM/TetO subfamily.

Its function is as follows. Abolishes the inhibitory effect of oxytetracycline on protein synthesis by a non-covalent modification of the ribosomes. The polypeptide is Oxytetracycline resistance protein (otrA) (Streptomyces rimosus).